A 378-amino-acid chain; its full sequence is Cyclic di-GMP phosphodiesterase response regulator RpfG (378 aa).

The region spanning 29–147 (NIVIVDDQMS…ELRARCSNLL (119 aa)) is the Response regulatory domain. The residue at position 80 (D80) is a 4-aspartylphosphate. In terms of domain architecture, HD-GYP spans 174 to 371 (VEERERETLS…LEQICGQFST (198 aa)).

In terms of assembly, interacts with a subset of GGDEF domain-containing proteins. Phosphorylated and activated by RpfC.

The protein resides in the cytoplasm. It catalyses the reaction 3',3'-c-di-GMP + 2 H2O = 2 GMP + 2 H(+). In terms of biological role, member of the two-component regulatory system RpfG/RpfC, which is involved in the perception and response to the diffusible signaling factor (DSF), which is essential for cell-cell signaling. Detection of DSF leads to the positive regulation of biofilm dispersal and the production of virulence factors. Activated RpfG degrades cyclic di-GMP to GMP, leading to the activation of Clp, a global transcriptional regulator that regulates a large set of genes in DSF pathway. May also directly control genes involved in biofilm dispersal. The sequence is that of Cyclic di-GMP phosphodiesterase response regulator RpfG (rpfG) from Xanthomonas campestris pv. campestris (strain 8004).